A 563-amino-acid chain; its full sequence is Putative cysteine ligase BshC (563 aa).

This sequence belongs to the BshC family.

This Chlorobium phaeobacteroides (strain BS1) protein is Putative cysteine ligase BshC.